A 79-amino-acid polypeptide reads, in one-letter code: Translational regulator CsrA (79 aa).

The protein belongs to the CsrA/RsmA family. As to quaternary structure, homodimer; the beta-strands of each monomer intercalate to form a hydrophobic core, while the alpha-helices form wings that extend away from the core.

It is found in the cytoplasm. A translational regulator that binds mRNA to regulate translation initiation and/or mRNA stability. Usually binds in the 5'-UTR at or near the Shine-Dalgarno sequence preventing ribosome-binding, thus repressing translation. Its main target seems to be the major flagellin gene, while its function is anatagonized by FliW. The protein is Translational regulator CsrA of Shouchella clausii (strain KSM-K16) (Alkalihalobacillus clausii).